Reading from the N-terminus, the 84-residue chain is Small ribosomal subunit protein bS18 (84 aa).

This sequence belongs to the bacterial ribosomal protein bS18 family. In terms of assembly, part of the 30S ribosomal subunit. Forms a tight heterodimer with protein bS6.

Functionally, binds as a heterodimer with protein bS6 to the central domain of the 16S rRNA, where it helps stabilize the platform of the 30S subunit. The protein is Small ribosomal subunit protein bS18 of Maricaulis maris (strain MCS10) (Caulobacter maris).